We begin with the raw amino-acid sequence, 423 residues long: Glutamate-1-semialdehyde 2,1-aminomutase (423 aa).

Lys-266 bears the N6-(pyridoxal phosphate)lysine mark.

This sequence belongs to the class-III pyridoxal-phosphate-dependent aminotransferase family. HemL subfamily. Homodimer. The cofactor is pyridoxal 5'-phosphate.

It is found in the cytoplasm. The enzyme catalyses (S)-4-amino-5-oxopentanoate = 5-aminolevulinate. The protein operates within porphyrin-containing compound metabolism; protoporphyrin-IX biosynthesis; 5-aminolevulinate from L-glutamyl-tRNA(Glu): step 2/2. This chain is Glutamate-1-semialdehyde 2,1-aminomutase, found in Nitratidesulfovibrio vulgaris (strain DP4) (Desulfovibrio vulgaris).